Here is a 354-residue protein sequence, read N- to C-terminus: Uroporphyrinogen decarboxylase (354 aa).

Substrate contacts are provided by residues 27 to 31 (RQAGR), Asp77, Tyr154, Thr209, and His327.

This sequence belongs to the uroporphyrinogen decarboxylase family. As to quaternary structure, homodimer.

It is found in the cytoplasm. The enzyme catalyses uroporphyrinogen III + 4 H(+) = coproporphyrinogen III + 4 CO2. It functions in the pathway porphyrin-containing compound metabolism; protoporphyrin-IX biosynthesis; coproporphyrinogen-III from 5-aminolevulinate: step 4/4. Catalyzes the decarboxylation of four acetate groups of uroporphyrinogen-III to yield coproporphyrinogen-III. This is Uroporphyrinogen decarboxylase from Shigella flexneri serotype 5b (strain 8401).